The following is a 458-amino-acid chain: uncharacterized protein (458 aa).

This is an uncharacterized protein from Bacillus subtilis (strain 168).